A 729-amino-acid chain; its full sequence is Fatty acid oxidation complex subunit alpha (729 aa).

Positions 1–189 are enoyl-CoA hydratase/isomerase; it reads MLYKGDTLYL…KIGLVDGVVK (189 aa). Aspartate 296 is a substrate binding site. The tract at residues 311 to 729 is 3-hydroxyacyl-CoA dehydrogenase; that stretch reads ETPKQAAVLG…ARPVGDLKTA (419 aa). NAD(+) contacts are provided by residues methionine 324, aspartate 343, 400 to 402, lysine 407, and serine 429; that span reads VVE. Catalysis depends on histidine 450, which acts as the For 3-hydroxyacyl-CoA dehydrogenase activity. NAD(+) is bound at residue asparagine 453. 2 residues coordinate substrate: asparagine 500 and tyrosine 660. The tract at residues 708–729 is disordered; the sequence is RHNEPYYPPVEPARPVGDLKTA.

In the N-terminal section; belongs to the enoyl-CoA hydratase/isomerase family. It in the C-terminal section; belongs to the 3-hydroxyacyl-CoA dehydrogenase family. As to quaternary structure, heterotetramer of two alpha chains (FadB) and two beta chains (FadA).

The enzyme catalyses a (3S)-3-hydroxyacyl-CoA + NAD(+) = a 3-oxoacyl-CoA + NADH + H(+). The catalysed reaction is a (3S)-3-hydroxyacyl-CoA = a (2E)-enoyl-CoA + H2O. It carries out the reaction a 4-saturated-(3S)-3-hydroxyacyl-CoA = a (3E)-enoyl-CoA + H2O. It catalyses the reaction (3S)-3-hydroxybutanoyl-CoA = (3R)-3-hydroxybutanoyl-CoA. The enzyme catalyses a (3Z)-enoyl-CoA = a 4-saturated (2E)-enoyl-CoA. The catalysed reaction is a (3E)-enoyl-CoA = a 4-saturated (2E)-enoyl-CoA. The protein operates within lipid metabolism; fatty acid beta-oxidation. Involved in the aerobic and anaerobic degradation of long-chain fatty acids via beta-oxidation cycle. Catalyzes the formation of 3-oxoacyl-CoA from enoyl-CoA via L-3-hydroxyacyl-CoA. It can also use D-3-hydroxyacyl-CoA and cis-3-enoyl-CoA as substrate. This is Fatty acid oxidation complex subunit alpha from Escherichia coli O6:H1 (strain CFT073 / ATCC 700928 / UPEC).